A 172-amino-acid polypeptide reads, in one-letter code: Translationally-controlled tumor protein (172 aa).

The TCTP domain occupies 1 to 172 (MIIYRDLISH…FKDGLEMEKC (172 aa)). Ser-46 carries the post-translational modification Phosphoserine; by PLK1. At Ser-53 the chain carries Phosphoserine. At Ser-64 the chain carries Phosphoserine; by PLK1. The required for reduction of TSC22D1 protein stability stretch occupies residues 70–172 (VDIVMNHHLQ…FKDGLEMEKC (103 aa)).

The protein belongs to the TCTP family. Homodimer. Interacts with STEAP3. Interacts with TSC22D1; interaction results in the destabilization of TSC22D1 protein.

It is found in the cytoplasm. Its function is as follows. Involved in calcium binding and microtubule stabilization. Acts as a negative regulator of TSC22D1-mediated apoptosis, via interaction with and destabilization of TSC22D1 protein. The protein is Translationally-controlled tumor protein (TPT1) of Bos taurus (Bovine).